The primary structure comprises 1189 residues: Origin recognition complex subunit 1 (1189 aa).

The interval 1–53 (MTPKKKIFQNFQANDNEILSPTKKGIKLNVSKLNILNFENTIITKEKTNYEYK) is required for peripherial nuclear localization. T2 is subject to Phosphothreonine. Position 20 is a phosphoserine (S20). 4 Leucine heptad repeat repeats span residues 137–143 (LTNISSS), 144–150 (LTNISSS), 151–157 (LTNISSS), and 158–164 (LSNSLDE). Basic residues predominate over residues 239–248 (KKNISKKNTH). Disordered regions lie at residues 239-421 (KKNI…DHTD) and 679-749 (DTQA…QSSL). The span at 254-279 (QNDKNKEKNKEKDKNIKKDRDKDIQT) shows a compositional bias: basic and acidic residues. Over residues 304–320 (NNDNVKNNLKNNINNNN) the composition is skewed to low complexity. Residues 321-339 (TLKRSSQSVRIDSDLSSAH) show a composition bias toward polar residues. A compositionally biased stretch (low complexity) spans 353–381 (HRNNNNNNNNNNKTTSNNHNKNNKINNNN). Over residues 385 to 394 (NYKKQTDTKH) the composition is skewed to basic and acidic residues. Over residues 395–411 (TNNTQNNKYNKTKTTNT) the composition is skewed to low complexity. A compositionally biased stretch (polar residues) spans 695–709 (KAQTTTNVKANTHTK). Composition is skewed to basic and acidic residues over residues 710–724 (TLND…KNKE) and 733–742 (DVKKKSDPHN). Residues V780 and 815–823 (GMPGTGKTA) each bind ATP. Residues D903 and E904 each contribute to the Mg(2+) site. E904 is a binding site for ATP. Positions 913–922 (QKVLFTLFDW) match the PIP-box motif. 2 residues coordinate ATP: N937 and R1003.

It belongs to the ORC1 family. Component of the origin recognition complex (ORC). Interacts (via PIP-box) with PCNA1; the interaction occurs during DNA replication in trophozoites. In terms of processing, in schizonts, may be phosphorylated by PK5; phosphorylation leads to ORC1 dissociation from the telomeres and var gene promoters, translocation to the cytoplasm, where it is degraded by the proteasome.

It is found in the nucleus. Its subcellular location is the chromosome. The protein localises to the telomere. The protein resides in the nucleolus. The enzyme catalyses ATP + H2O = ADP + phosphate + H(+). Its function is as follows. Component of the origin recognition complex (ORC) that binds origins of replication and thus may regulate the initiation of DNA replication. DNA-binding may not be ATP-dependent. In a SIR2A/Sir2-dependent manner, binds to and silences telomers and subtelomeric repeat regions (TAREs). In a SIR2A/Sir2-dependent manner, binds to promoters of var genes localized next to TAREs resulting in their silencing. The chain is Origin recognition complex subunit 1 from Plasmodium falciparum (isolate 3D7).